A 286-amino-acid chain; its full sequence is Bifunctional protein FolD (286 aa).

NADP(+) contacts are provided by residues 166–168 (GAS) and Ile232.

Belongs to the tetrahydrofolate dehydrogenase/cyclohydrolase family. As to quaternary structure, homodimer.

The enzyme catalyses (6R)-5,10-methylene-5,6,7,8-tetrahydrofolate + NADP(+) = (6R)-5,10-methenyltetrahydrofolate + NADPH. The catalysed reaction is (6R)-5,10-methenyltetrahydrofolate + H2O = (6R)-10-formyltetrahydrofolate + H(+). The protein operates within one-carbon metabolism; tetrahydrofolate interconversion. Functionally, catalyzes the oxidation of 5,10-methylenetetrahydrofolate to 5,10-methenyltetrahydrofolate and then the hydrolysis of 5,10-methenyltetrahydrofolate to 10-formyltetrahydrofolate. This is Bifunctional protein FolD from Marinobacter nauticus (strain ATCC 700491 / DSM 11845 / VT8) (Marinobacter aquaeolei).